A 225-amino-acid chain; its full sequence is Protein YIP4 (225 aa).

2 positions are modified to phosphoserine: S27 and S28. 5 helical membrane-spanning segments follow: residues 91–111 (WDLWGPLIFSLVIALALALST), 118–138 (SVFTVVVALIWFGEAVCSLNI), 154–176 (LGYSSFPLMIASIVCAFVPLIFI), 180–199 (VIVAMYAWTLFAAMGVLQNS), and 205–225 (KLLAVYPLFLFYFSLAWIIFL).

This sequence belongs to the YIP1 family. In terms of assembly, interacts with the YIP1 family members yip1 and yip5, and with several Rab GTPases.

It is found in the membrane. Its function is as follows. May be involved in proper membrane localization of Rab GTPases. This chain is Protein YIP4, found in Schizosaccharomyces pombe (strain 972 / ATCC 24843) (Fission yeast).